We begin with the raw amino-acid sequence, 177 residues long: Ribosome maturation factor RimM (177 aa).

The PRC barrel domain maps to 100 to 177 (EDEYYWSDLV…TVLVAWPSDY (78 aa)).

The protein belongs to the RimM family. As to quaternary structure, binds ribosomal protein uS19.

The protein localises to the cytoplasm. Functionally, an accessory protein needed during the final step in the assembly of 30S ribosomal subunit, possibly for assembly of the head region. Essential for efficient processing of 16S rRNA. May be needed both before and after RbfA during the maturation of 16S rRNA. It has affinity for free ribosomal 30S subunits but not for 70S ribosomes. This Psychrobacter cryohalolentis (strain ATCC BAA-1226 / DSM 17306 / VKM B-2378 / K5) protein is Ribosome maturation factor RimM.